The chain runs to 419 residues: Tryptophan synthase beta chain (419 aa).

Lys-113 is subject to N6-(pyridoxal phosphate)lysine.

The protein belongs to the TrpB family. Tetramer of two alpha and two beta chains. The cofactor is pyridoxal 5'-phosphate.

It carries out the reaction (1S,2R)-1-C-(indol-3-yl)glycerol 3-phosphate + L-serine = D-glyceraldehyde 3-phosphate + L-tryptophan + H2O. The protein operates within amino-acid biosynthesis; L-tryptophan biosynthesis; L-tryptophan from chorismate: step 5/5. The beta subunit is responsible for the synthesis of L-tryptophan from indole and L-serine. This chain is Tryptophan synthase beta chain, found in Picrophilus torridus (strain ATCC 700027 / DSM 9790 / JCM 10055 / NBRC 100828 / KAW 2/3).